Consider the following 1397-residue polypeptide: DNA-directed RNA polymerase subunit beta' (1397 aa).

Positions 71, 73, 86, and 89 each coordinate Zn(2+). Aspartate 462, aspartate 464, and aspartate 466 together coordinate Mg(2+). Zn(2+) contacts are provided by cysteine 811, cysteine 885, cysteine 892, and cysteine 895. Residues 1368-1397 form a disordered region; sequence QNRDDKILEDQGGATPTASTEIKEPAEGAA. A compositionally biased stretch (basic and acidic residues) spans 1388–1397; the sequence is EIKEPAEGAA.

It belongs to the RNA polymerase beta' chain family. As to quaternary structure, the RNAP catalytic core consists of 2 alpha, 1 beta, 1 beta' and 1 omega subunit. When a sigma factor is associated with the core the holoenzyme is formed, which can initiate transcription. Mg(2+) is required as a cofactor. Requires Zn(2+) as cofactor.

It carries out the reaction RNA(n) + a ribonucleoside 5'-triphosphate = RNA(n+1) + diphosphate. In terms of biological role, DNA-dependent RNA polymerase catalyzes the transcription of DNA into RNA using the four ribonucleoside triphosphates as substrates. This is DNA-directed RNA polymerase subunit beta' from Parvibaculum lavamentivorans (strain DS-1 / DSM 13023 / NCIMB 13966).